The sequence spans 314 residues: MMCLKLNLLDHVFANPFMNAAGVLCSTEEDLRCMTASSSGALVSKSCTSAPRDGNPEPRYMAFPLGSINSMGLPNLGFDFYLKYASDLHDYSKKPLFLSISGLSVEENVAMVRRLAPVAQEKGVLLELNLSCPNVPGKPQVAYDFEAMRTYLQQVSLAYGLPFGVKMPPYFDIAHFDTAAAVLNEFPLVKFVTCVNSVGNGLVIDAESESVVIKPKQGFGGLGGKYILPTALANVNAFYRRCPDKLVFGCGGVYSGEDAFLHILAGASMVQVGTALQEEGPGIFTRLEDELLEIMARKGYRTLEEFRGRVKTIE.

FMN is bound by residues Ala-21 and 45–46 (KS). Substrate contacts are provided by residues Lys-45, 69–73 (NSMGL), and Asn-129. Asn-129 lines the FMN pocket. Cys-132 acts as the Nucleophile in catalysis. Asn-134 provides a ligand contact to substrate. Lys-166 and Val-195 together coordinate FMN. 196-197 (NS) serves as a coordination point for substrate. Residues Gly-224, 251–252 (GG), and 273–274 (GT) contribute to the FMN site.

It belongs to the dihydroorotate dehydrogenase family. Type 1 subfamily. In terms of assembly, homodimer. Requires FMN as cofactor.

Its subcellular location is the cytoplasm. The enzyme catalyses (S)-dihydroorotate + fumarate = orotate + succinate. It functions in the pathway pyrimidine metabolism; UMP biosynthesis via de novo pathway. Its function is as follows. Catalyzes the conversion of dihydroorotate to orotate with fumarate as the electron acceptor. Molecular oxygen can replace fumarate in vitro. The chain is Dihydroorotate dehydrogenase (fumarate) (pyr4) from Trypanosoma cruzi (strain CL Brener).